We begin with the raw amino-acid sequence, 60 residues long: Photosystem II reaction center protein L (60 aa).

A helical membrane pass occupies residues 39-59 (SLYWGLLLIFVLAVLFSSYIF).

Belongs to the PsbL family. In terms of assembly, PSII is composed of 1 copy each of membrane proteins PsbA, PsbB, PsbC, PsbD, PsbE, PsbF, PsbH, PsbI, PsbJ, PsbK, PsbL, PsbM, PsbT, PsbX, PsbY, PsbZ, Psb30/Ycf12, at least 3 peripheral proteins of the oxygen-evolving complex and a large number of cofactors. It forms dimeric complexes.

It localises to the plastid. It is found in the chloroplast thylakoid membrane. Its function is as follows. One of the components of the core complex of photosystem II (PSII). PSII is a light-driven water:plastoquinone oxidoreductase that uses light energy to abstract electrons from H(2)O, generating O(2) and a proton gradient subsequently used for ATP formation. It consists of a core antenna complex that captures photons, and an electron transfer chain that converts photonic excitation into a charge separation. This subunit is found at the monomer-monomer interface and is required for correct PSII assembly and/or dimerization. In Oedogonium cardiacum (Filamentous green alga), this protein is Photosystem II reaction center protein L.